Here is a 109-residue protein sequence, read N- to C-terminus: Class I hydrophobin SC1 (109 aa).

The signal sequence occupies residues 1-22 (MRFSLAILALPVLAAATAVPRG). Cystine bridges form between cysteine 27–cysteine 88, cysteine 34–cysteine 82, cysteine 35–cysteine 69, and cysteine 89–cysteine 102.

This sequence belongs to the fungal hydrophobin family. Self-assembles to form functional amyloid fibrils called rodlets. Self-assembly into fibrillar rodlets occurs spontaneously at hydrophobic:hydrophilic interfaces and the rodlets further associate laterally to form amphipathic monolayers.

It is found in the secreted. Its subcellular location is the cell wall. Functionally, aerial growth, conidiation, and dispersal of filamentous fungi in the environment rely upon a capability of their secreting small amphipathic proteins called hydrophobins (HPBs) with low sequence identity. Class I can self-assemble into an outermost layer of rodlet bundles on aerial cell surfaces, conferring cellular hydrophobicity that supports fungal growth, development and dispersal; whereas Class II form highly ordered films at water-air interfaces through intermolecular interactions but contribute nothing to the rodlet structure. SC1 is a dikaryon-specific class I hydrophobin that contributes to the formation of aerial hyphae and fruiting bodies. The polypeptide is Class I hydrophobin SC1 (Schizophyllum commune (Split gill fungus)).